A 213-amino-acid polypeptide reads, in one-letter code: Probable nicotinate-nucleotide adenylyltransferase (213 aa).

Belongs to the NadD family.

The enzyme catalyses nicotinate beta-D-ribonucleotide + ATP + H(+) = deamido-NAD(+) + diphosphate. Its pathway is cofactor biosynthesis; NAD(+) biosynthesis; deamido-NAD(+) from nicotinate D-ribonucleotide: step 1/1. In terms of biological role, catalyzes the reversible adenylation of nicotinate mononucleotide (NaMN) to nicotinic acid adenine dinucleotide (NaAD). This is Probable nicotinate-nucleotide adenylyltransferase from Trichlorobacter lovleyi (strain ATCC BAA-1151 / DSM 17278 / SZ) (Geobacter lovleyi).